A 635-amino-acid polypeptide reads, in one-letter code: Threonine--tRNA ligase (635 aa).

Residues 1–61 enclose the TGS domain; that stretch reads MVSIRLPDGS…DRDASLAIVT (61 aa). The interval 242-533 is catalytic; it reads DHRKLGKQLD…LIEHHAGAMP (292 aa). Zn(2+) is bound by residues C333, H384, and H510.

Belongs to the class-II aminoacyl-tRNA synthetase family. Homodimer. Zn(2+) is required as a cofactor.

It localises to the cytoplasm. It carries out the reaction tRNA(Thr) + L-threonine + ATP = L-threonyl-tRNA(Thr) + AMP + diphosphate + H(+). Catalyzes the attachment of threonine to tRNA(Thr) in a two-step reaction: L-threonine is first activated by ATP to form Thr-AMP and then transferred to the acceptor end of tRNA(Thr). Also edits incorrectly charged L-seryl-tRNA(Thr). In Burkholderia lata (strain ATCC 17760 / DSM 23089 / LMG 22485 / NCIMB 9086 / R18194 / 383), this protein is Threonine--tRNA ligase.